Consider the following 191-residue polypeptide: Classical arabinogalactan protein 9 (191 aa).

The N-terminal stretch at 1-20 (MARSFAIAVICIVLIAGVTG) is a signal peptide. Residues 20-172 (GQAPTSPPTA…SPTDVNDQNG (153 aa)) form a disordered region. Q21 carries the post-translational modification Pyrrolidone carboxylic acid. Residues P23, P26, P27, P31, and P33 each carry the 4-hydroxyproline modification. Residues 24-146 (TSPPTATPAP…PSPSSSPPLP (123 aa)) are compositionally biased toward pro residues. P26, P27, P31, and P33 each carry an O-linked (Ara...) hydroxyproline glycan. The span at 155–172 (TDSISPAPSPTDVNDQNG) shows a compositional bias: polar residues. G172 carries the GPI-anchor amidated glycine lipid modification. Positions 173–191 (ASKMVSSLVFGSVLVWFMI) are cleaved as a propeptide — removed in mature form.

Belongs to the classical AGP family. In terms of processing, O-glycosylated on hydroxyprolines; noncontiguous hydroxylproline residues are glycosylated with arabinogalactan. As to expression, predominantly expressed in flowers and at a lower level in leaves and siliques.

The protein resides in the cell membrane. Its function is as follows. Proteoglycan that seems to be implicated in diverse developmental roles such as differentiation, cell-cell recognition, embryogenesis and programmed cell death. This chain is Classical arabinogalactan protein 9 (AGP9), found in Arabidopsis thaliana (Mouse-ear cress).